Reading from the N-terminus, the 256-residue chain is D-aminoacyl-tRNA deacylase (256 aa).

This sequence belongs to the DtdA deacylase family. As to quaternary structure, monomer. Zn(2+) serves as cofactor.

The catalysed reaction is a D-aminoacyl-tRNA + H2O = a tRNA + a D-alpha-amino acid + H(+). It catalyses the reaction glycyl-tRNA(Ala) + H2O = tRNA(Ala) + glycine + H(+). Functionally, D-aminoacyl-tRNA deacylase with broad substrate specificity. By recycling D-aminoacyl-tRNA to D-amino acids and free tRNA molecules, this enzyme counteracts the toxicity associated with the formation of D-aminoacyl-tRNA entities in vivo. The sequence is that of D-aminoacyl-tRNA deacylase from Thermoplasma volcanium (strain ATCC 51530 / DSM 4299 / JCM 9571 / NBRC 15438 / GSS1).